A 228-amino-acid polypeptide reads, in one-letter code: Ribulose-phosphate 3-epimerase-like protein 1 (228 aa).

Serine 10 contacts substrate. Positions 35, 37, and 70 each coordinate a divalent metal cation. The active-site Proton acceptor is aspartate 37. Residues histidine 70, glycine 146–glutamate 149, aspartate 175–glycine 177, and glycine 197–serine 198 each bind substrate. Aspartate 175 contacts a divalent metal cation. The active-site Proton donor is the aspartate 175.

This sequence belongs to the ribulose-phosphate 3-epimerase family. Homodimer. Requires Fe(2+) as cofactor. The cofactor is Mn(2+). Zn(2+) serves as cofactor. Co(2+) is required as a cofactor.

The enzyme catalyses D-ribulose 5-phosphate = D-xylulose 5-phosphate. Its pathway is carbohydrate degradation. Its function is as follows. Catalyzes the reversible epimerization of D-ribulose 5-phosphate to D-xylulose 5-phosphate. The chain is Ribulose-phosphate 3-epimerase-like protein 1 (RPEL1) from Homo sapiens (Human).